The following is a 250-amino-acid chain: Ubiquinone/menaquinone biosynthesis C-methyltransferase UbiE (250 aa).

S-adenosyl-L-methionine is bound by residues Thr-74, Asp-94, 122-123 (DA), and Ser-139.

Belongs to the class I-like SAM-binding methyltransferase superfamily. MenG/UbiE family.

The enzyme catalyses a 2-demethylmenaquinol + S-adenosyl-L-methionine = a menaquinol + S-adenosyl-L-homocysteine + H(+). It catalyses the reaction a 2-methoxy-6-(all-trans-polyprenyl)benzene-1,4-diol + S-adenosyl-L-methionine = a 5-methoxy-2-methyl-3-(all-trans-polyprenyl)benzene-1,4-diol + S-adenosyl-L-homocysteine + H(+). Its pathway is quinol/quinone metabolism; menaquinone biosynthesis; menaquinol from 1,4-dihydroxy-2-naphthoate: step 2/2. The protein operates within cofactor biosynthesis; ubiquinone biosynthesis. Its function is as follows. Methyltransferase required for the conversion of demethylmenaquinol (DMKH2) to menaquinol (MKH2) and the conversion of 2-polyprenyl-6-methoxy-1,4-benzoquinol (DDMQH2) to 2-polyprenyl-3-methyl-6-methoxy-1,4-benzoquinol (DMQH2). In Cereibacter sphaeroides (strain ATCC 17029 / ATH 2.4.9) (Rhodobacter sphaeroides), this protein is Ubiquinone/menaquinone biosynthesis C-methyltransferase UbiE.